The primary structure comprises 311 residues: uncharacterized protein (311 aa).

This is an uncharacterized protein from Bacillus subtilis (strain 168).